Reading from the N-terminus, the 299-residue chain is MSQSKRLRIAIQKSGRLSKESQQLLKSCGVKFNVNEQRLIAHADNMPIDLLRVRDDDIPGLVMDGVVDLGIIGENVLEEEQIERQLAGKPAECTKLRELDFGSCRLSLAVPNEFEYKDANSLEGLRIATSYPNLLRRFMQEKGINYSDCMLKGSVEVAPRAGLSDGICDLVSTGATLEANGLYETEVIYRSMACIIQSNKTQSTEKQALINKILSRINGVIRARESKYILLHAPVETLDQIVALLPGAENPTVLPLNDDTNRVAIHVVSTEDLFWDTMEELTALGASSILVMPIEKMMG.

The protein belongs to the ATP phosphoribosyltransferase family. Long subfamily. Mg(2+) serves as cofactor.

It localises to the cytoplasm. The enzyme catalyses 1-(5-phospho-beta-D-ribosyl)-ATP + diphosphate = 5-phospho-alpha-D-ribose 1-diphosphate + ATP. Its pathway is amino-acid biosynthesis; L-histidine biosynthesis; L-histidine from 5-phospho-alpha-D-ribose 1-diphosphate: step 1/9. With respect to regulation, feedback inhibited by histidine. In terms of biological role, catalyzes the condensation of ATP and 5-phosphoribose 1-diphosphate to form N'-(5'-phosphoribosyl)-ATP (PR-ATP). Has a crucial role in the pathway because the rate of histidine biosynthesis seems to be controlled primarily by regulation of HisG enzymatic activity. The chain is ATP phosphoribosyltransferase from Shewanella frigidimarina (strain NCIMB 400).